A 149-amino-acid chain; its full sequence is MKKVIIYTDGACRGNGQENTIGAYGIVLMYGEHKKEIKKAFRDTTNNIMELSAVVEALSLLKEPCSIELYSDSAYVINAINQKWLDNWKKNNWKTASKSPVKNKELWEKLDELLKKHSVKFIKVKGHSDNEYNNRCDKLANEAMDEFNV.

In terms of domain architecture, RNase H type-1 spans 1 to 145; that stretch reads MKKVIIYTDG…CDKLANEAMD (145 aa). Residues Asp9, Glu50, Asp72, and Asp137 each contribute to the Mg(2+) site.

The protein belongs to the RNase H family. As to quaternary structure, monomer. The cofactor is Mg(2+).

It localises to the cytoplasm. It carries out the reaction Endonucleolytic cleavage to 5'-phosphomonoester.. Its function is as follows. Endonuclease that specifically degrades the RNA of RNA-DNA hybrids. This Clostridium botulinum (strain ATCC 19397 / Type A) protein is Ribonuclease H.